The sequence spans 521 residues: U4/U6 small nuclear ribonucleoprotein Prp4 (521 aa).

Lysine 26 carries the post-translational modification N6-acetyllysine. WD repeat units follow at residues 228-267 (GDDRPISYCHFSPNSKMLATACWSGLCKLWSVPDCSLLHT), 270-317 (GHNT…PVAD), 320-359 (GHTVRVARVMWHPSGRFLGTTCYDRSWRLWDLEAQEEILH), 362-401 (GHSMGVYDIAFHQDGSLAGTGGLDAFGRVWDLRTGRCIMF), 404-443 (GHLKEIYGINFSPNGYHIATGSGDNTCKVWDLRQRRCVYT), 446-486 (AHQN…PLKT), and 489-521 (GHEGKVMGLDISSDGQLIATCSYDRTFKLWMAE).

As to quaternary structure, component of the precatalytic spliceosome (spliceosome B complex). Component of the U4/U6-U5 tri-snRNP complex, a building block of the precatalytic spliceosome (spliceosome B complex). The U4/U6-U5 tri-snRNP complex is composed of the U4, U6 and U5 snRNAs and at least PRPF3, PRPF4, PRPF6, PRPF8, PRPF31, SNRNP200, TXNL4A, SNRNP40, SNRPB, SNRPD1, SNRPD2, SNRPD3, SNRPE, SNRPF, SNRPG, DDX23, CD2BP2, PPIH, SNU13, EFTUD2, SART1 and USP39, plus LSM2, LSM3, LSM4, LSM5, LSM6, LSM7 and LSM8. Interacts directly with PRPF18, PPIH and PRPF3. Part of a heteromeric complex containing PPIH, PRPF3 and PRPF4 that is stable in the absence of RNA. Interacts with ERCC6.

The protein localises to the nucleus. It is found in the nucleus speckle. Its function is as follows. Plays a role in pre-mRNA splicing as component of the U4/U6-U5 tri-snRNP complex that is involved in spliceosome assembly, and as component of the precatalytic spliceosome (spliceosome B complex). In Mus musculus (Mouse), this protein is U4/U6 small nuclear ribonucleoprotein Prp4 (Prpf4).